The primary structure comprises 617 residues: Proline--tRNA ligase (617 aa).

Belongs to the class-II aminoacyl-tRNA synthetase family. ProS type 1 subfamily. Homodimer.

It is found in the cytoplasm. The catalysed reaction is tRNA(Pro) + L-proline + ATP = L-prolyl-tRNA(Pro) + AMP + diphosphate. Functionally, catalyzes the attachment of proline to tRNA(Pro) in a two-step reaction: proline is first activated by ATP to form Pro-AMP and then transferred to the acceptor end of tRNA(Pro). As ProRS can inadvertently accommodate and process non-cognate amino acids such as alanine and cysteine, to avoid such errors it has two additional distinct editing activities against alanine. One activity is designated as 'pretransfer' editing and involves the tRNA(Pro)-independent hydrolysis of activated Ala-AMP. The other activity is designated 'posttransfer' editing and involves deacylation of mischarged Ala-tRNA(Pro). The misacylated Cys-tRNA(Pro) is not edited by ProRS. This Streptococcus pneumoniae (strain ATCC 700669 / Spain 23F-1) protein is Proline--tRNA ligase.